A 171-amino-acid polypeptide reads, in one-letter code: T-cell surface glycoprotein CD3 delta chain (171 aa).

An N-terminal signal peptide occupies residues 1–21 (MEHSTFLSGLVLATLLSQVSP). The Extracellular segment spans residues 22–105 (FKIPIEELED…CVELDPATVA (84 aa)). Cys37 and Cys73 are disulfide-bonded. Asn38 and Asn74 each carry an N-linked (GlcNAc...) asparagine glycan. Residues 106–126 (GIIVTDVIATLLLALGVFCFA) traverse the membrane as a helical segment. Residues 127-171 (GHETGRLSGAADTQALLRNDQVYQPLRDRDDAQYSHLGGNWARNK) are Cytoplasmic-facing. The 29-residue stretch at 138–166 (DTQALLRNDQVYQPLRDRDDAQYSHLGGN) folds into the ITAM domain. Phosphotyrosine occurs at positions 149 and 160.

As to quaternary structure, the TCR-CD3 complex is composed of a CD3D/CD3E and a CD3G/CD3E heterodimers that preferentially associate with TCRalpha and TCRbeta, respectively, to form TCRalpha/CD3E/CD3G and TCRbeta/CD3G/CD3E trimers. In turn, the hexamer interacts with CD3Z homodimer to form the TCR-CD3 complex. Alternatively, TCRalpha and TCRbeta can be replaced by TCRgamma and TCRdelta. Interacts with coreceptors CD4 and CD8. Phosphorylated on Tyr residues after T-cell receptor triggering by LCK in association with CD4/CD8. CD3D is mostly present on T-lymphocytes with its TCR-CD3 partners. Present also in fetal NK-cells.

It localises to the cell membrane. Functionally, part of the TCR-CD3 complex present on T-lymphocyte cell surface that plays an essential role in adaptive immune response. When antigen presenting cells (APCs) activate T-cell receptor (TCR), TCR-mediated signals are transmitted across the cell membrane by the CD3 chains CD3D, CD3E, CD3G and CD3Z. All CD3 chains contain immunoreceptor tyrosine-based activation motifs (ITAMs) in their cytoplasmic domain. Upon TCR engagement, these motifs become phosphorylated by Src family protein tyrosine kinases LCK and FYN, resulting in the activation of downstream signaling pathways. In addition of this role of signal transduction in T-cell activation, CD3D plays an essential role in thymocyte differentiation. Indeed, participates in correct intracellular TCR-CD3 complex assembly and surface expression. In absence of a functional TCR-CD3 complex, thymocytes are unable to differentiate properly. Interacts with CD4 and CD8 and thus serves to establish a functional link between the TCR and coreceptors CD4 and CD8, which is needed for activation and positive selection of CD4 or CD8 T-cells. The sequence is that of T-cell surface glycoprotein CD3 delta chain (CD3D) from Homo sapiens (Human).